Here is a 156-residue protein sequence, read N- to C-terminus: Large ribosomal subunit protein eL24 (156 aa).

Positions 87 to 156 are disordered; that stretch reads LELIKERRSQ…AFQKVHATSR (70 aa). Positions 89–129 are enriched in basic and acidic residues; the sequence is LIKERRSQKPSDRKAARDVKLAKDKEAKKADKAARKAEKAK. A compositionally biased stretch (low complexity) spans 130–147; the sequence is SAAAGAQSKVSKQQSKGA.

Belongs to the eukaryotic ribosomal protein eL24 family.

In Debaryomyces hansenii (strain ATCC 36239 / CBS 767 / BCRC 21394 / JCM 1990 / NBRC 0083 / IGC 2968) (Yeast), this protein is Large ribosomal subunit protein eL24 (RPL24).